The chain runs to 596 residues: Probable ABC transporter ECU01_0200/ECU01_1410 (596 aa).

The next 3 membrane-spanning stretches (helical) occupy residues 26-46 (ALMA…VMSI), 173-193 (LVPI…MLRI), and 289-309 (LSVL…LGGI). One can recognise an ABC transmembrane type-1 domain in the interval 39–318 (KWFDVMSIKR…IARDLGFWLT (280 aa)). The region spanning 361–593 (VEFDDVSFAY…RGMYWRMKTA (233 aa)) is the ABC transporter domain. Residues Tyr-370 and 400–411 (GRPGSGKSTILR) contribute to the ATP site.

It belongs to the ABC transporter superfamily. ABCB family. Heavy Metal importer (TC 3.A.1.210) subfamily.

The protein localises to the membrane. This Encephalitozoon cuniculi (strain GB-M1) (Microsporidian parasite) protein is Probable ABC transporter ECU01_0200/ECU01_1410.